The primary structure comprises 164 residues: Lipoprotein signal peptidase (164 aa).

Transmembrane regions (helical) follow at residues 12 to 32 (WLWL…LILQ), 70 to 90 (WFFA…MYRS), and 102 to 122 (ALII…GFVV). Active-site residues include Asp-123 and Asp-141. Residues 137–157 (FNLADTAICVGAALIVLEGFL) traverse the membrane as a helical segment.

It belongs to the peptidase A8 family.

It localises to the cell inner membrane. It carries out the reaction Release of signal peptides from bacterial membrane prolipoproteins. Hydrolyzes -Xaa-Yaa-Zaa-|-(S,diacylglyceryl)Cys-, in which Xaa is hydrophobic (preferably Leu), and Yaa (Ala or Ser) and Zaa (Gly or Ala) have small, neutral side chains.. Its pathway is protein modification; lipoprotein biosynthesis (signal peptide cleavage). Its function is as follows. This protein specifically catalyzes the removal of signal peptides from prolipoproteins. The sequence is that of Lipoprotein signal peptidase from Shigella sonnei (strain Ss046).